We begin with the raw amino-acid sequence, 261 residues long: Type III pantothenate kinase (261 aa).

An ATP-binding site is contributed by 7–14 (EQGNTNTM). 108–111 (GADR) lines the substrate pocket. D110 acts as the Proton acceptor in catalysis. D130 provides a ligand contact to K(+). T133 contributes to the ATP binding site. T187 lines the substrate pocket.

It belongs to the type III pantothenate kinase family. Homodimer. Requires NH4(+) as cofactor. K(+) serves as cofactor.

Its subcellular location is the cytoplasm. The enzyme catalyses (R)-pantothenate + ATP = (R)-4'-phosphopantothenate + ADP + H(+). It participates in cofactor biosynthesis; coenzyme A biosynthesis; CoA from (R)-pantothenate: step 1/5. In terms of biological role, catalyzes the phosphorylation of pantothenate (Pan), the first step in CoA biosynthesis. The protein is Type III pantothenate kinase of Caulobacter vibrioides (strain ATCC 19089 / CIP 103742 / CB 15) (Caulobacter crescentus).